A 193-amino-acid polypeptide reads, in one-letter code: Selenate reductase assembly chaperone protein (193 aa).

Belongs to the type II DMSO reductase enzyme chaperone family.

It is found in the cytoplasm. Its function is as follows. May function as a system-specific chaperone protein essential for the assembly of an active selenate reductase SerABC. This is Selenate reductase assembly chaperone protein from Thauera selenatis.